Consider the following 153-residue polypeptide: Small ribosomal subunit protein uS19A (153 aa).

This sequence belongs to the universal ribosomal protein uS19 family. In terms of assembly, component of the small ribosomal subunit (SSU). Mature yeast ribosomes consist of a small (40S) and a large (60S) subunit. The 40S small subunit contains 1 molecule of ribosomal RNA (18S rRNA) and at least 33 different proteins. The large 60S subunit contains 3 rRNA molecules (25S, 5.8S and 5S rRNA) and at least 46 different proteins.

It localises to the cytoplasm. The protein localises to the nucleus. The protein resides in the nucleolus. Component of the ribosome, a large ribonucleoprotein complex responsible for the synthesis of proteins in the cell. The small ribosomal subunit (SSU) binds messenger RNAs (mRNAs) and translates the encoded message by selecting cognate aminoacyl-transfer RNA (tRNA) molecules. The large subunit (LSU) contains the ribosomal catalytic site termed the peptidyl transferase center (PTC), which catalyzes the formation of peptide bonds, thereby polymerizing the amino acids delivered by tRNAs into a polypeptide chain. The nascent polypeptides leave the ribosome through a tunnel in the LSU and interact with protein factors that function in enzymatic processing, targeting, and the membrane insertion of nascent chains at the exit of the ribosomal tunnel. uS19 is involved in the nuclear export of the small ribosomal subunit precursor. Has a role in the late stage of the assembly of pre-40S particles within the nucleus and controls their export to the cytoplasm. This Schizosaccharomyces pombe (strain 972 / ATCC 24843) (Fission yeast) protein is Small ribosomal subunit protein uS19A (rps1501).